We begin with the raw amino-acid sequence, 405 residues long: MEIILGIVMFTVIVLVLALMILFAKSKLVSEGDITIKVNGEKELTMPAGGKLLGALANEGIFIPSACGGGGSCGQCRVVVKSGGGDILPTELSHISKREAREGCRLSCQVNVKTDMDIEVPEEVFGVKKWECTVISNDNKATFIKELKLAIPEGEEVPFRAGGYIQIEAPPHTVAYKDFDIPEEYHEDWDKYNLWQYVSKVDEPILRAYSMASYPEEKGIIMLNVRIATPPPRVPDAPPGQMSSYIWSLKPGDKVTISGPFGEFFAKDTDAEMVFIGGGAGMAPMRSHIFDQLKRLNSKRKITFWYGARSKREMFYVEDFDQLAAEFPNFTWHVALSDPLPEDNWDGYTGFIHNVVYENHLKNHEAPEDCEFYMCGPPIMNQSVIKMLKDLGVEDENILLDDFGG.

A helical transmembrane segment spans residues 3–23 (IILGIVMFTVIVLVLALMILF). The 2Fe-2S ferredoxin-type domain maps to 32 to 124 (GDITIKVNGE…DMDIEVPEEV (93 aa)). Cys67, Cys73, Cys76, and Cys108 together coordinate [2Fe-2S] cluster. Residues 127 to 267 (VKKWECTVIS…SGPFGEFFAK (141 aa)) enclose the FAD-binding FR-type domain.

The protein belongs to the NqrF family. Composed of six subunits; NqrA, NqrB, NqrC, NqrD, NqrE and NqrF. [2Fe-2S] cluster serves as cofactor. Requires FAD as cofactor.

The protein resides in the cell inner membrane. The enzyme catalyses a ubiquinone + n Na(+)(in) + NADH + H(+) = a ubiquinol + n Na(+)(out) + NAD(+). In terms of biological role, NQR complex catalyzes the reduction of ubiquinone-1 to ubiquinol by two successive reactions, coupled with the transport of Na(+) ions from the cytoplasm to the periplasm. The first step is catalyzed by NqrF, which accepts electrons from NADH and reduces ubiquinone-1 to ubisemiquinone by a one-electron transfer pathway. The sequence is that of Na(+)-translocating NADH-quinone reductase subunit F from Neisseria meningitidis serogroup C / serotype 2a (strain ATCC 700532 / DSM 15464 / FAM18).